We begin with the raw amino-acid sequence, 304 residues long: Agmatinase (304 aa).

Residues H126, D149, H151, D153, D230, and D232 each coordinate Mn(2+).

The protein belongs to the arginase family. Agmatinase subfamily. Requires Mn(2+) as cofactor.

It carries out the reaction agmatine + H2O = urea + putrescine. It functions in the pathway amine and polyamine biosynthesis; putrescine biosynthesis via agmatine pathway; putrescine from agmatine: step 1/1. Catalyzes the formation of putrescine from agmatine. The polypeptide is Agmatinase (Edwardsiella ictaluri (strain 93-146)).